The sequence spans 453 residues: Allantoinase (453 aa).

Residues His59, His61, Lys146, His186, His242, and Asp315 each coordinate Zn(2+). Lys146 carries the N6-carboxylysine modification.

This sequence belongs to the metallo-dependent hydrolases superfamily. Allantoinase family. As to quaternary structure, homotetramer. Zn(2+) serves as cofactor. Post-translationally, carboxylation allows a single lysine to coordinate two zinc ions.

The catalysed reaction is (S)-allantoin + H2O = allantoate + H(+). It functions in the pathway nitrogen metabolism; (S)-allantoin degradation; allantoate from (S)-allantoin: step 1/1. Its function is as follows. Catalyzes the conversion of allantoin (5-ureidohydantoin) to allantoic acid by hydrolytic cleavage of the five-member hydantoin ring. In Escherichia coli (strain SMS-3-5 / SECEC), this protein is Allantoinase.